Consider the following 786-residue polypeptide: Rho GTPase-activating protein 10 (786 aa).

One can recognise a BAR domain in the interval 7–262; sequence EFSDCYLDSP…IRQNPKDQKR (256 aa). Residues 265–372 form the PH domain; sequence QFTAEGYLYV…WLEALGGKEA (108 aa). The region spanning 389-574 is the Rho-GAP domain; sequence AQLDKMGFTI…ILIENHEKIF (186 aa). Disordered stretches follow at residues 584–609 and 622–714; these read EPTCLSASPPNAPPRQSKRQGQRTKR and EGDS…PFPL. Basic residues predominate over residues 599 to 609; that stretch reads QSKRQGQRTKR. Residues 634–649 show a composition bias toward low complexity; that stretch reads PSSSQDSLSTPSPTTS. The span at 673-701 shows a compositional bias: polar residues; the sequence is TATTPSQTRPSMVQWLNMQSPTTPSSNPA. The span at 702 to 714 shows a compositional bias: pro residues; the sequence is GTPPSPRMSPFPL. The SH3 domain occupies 728–786; sequence VINRKARAVYPCEAEHSSELSFEIGAIFEDVQTSREPGWLEGTLNGKRGLIPQNYVKLL.

Interacts with PKN3. Interacts with caspase-activated PAK2 proteolytic fragment PAK-2p34; the interaction does not affect ARHGAP10 GTPase activation activity towards RHOA and CDC42. Interacts via its SH3 domain with PTK2/FAK1. Interacts with PTK2B/PYK2; the interaction negatively regulates ARHGAP10 GTPase-activating activity. Interacts with MICAL1 and WDR44; complex formation might transit from GRAF2/ARHGAP10-MICAL1 to GRAF2/ARHGAP10-WDR44 complexes. Post-translationally, phosphorylated on tyrosine residues, probably involving PTK2B/PYK2. As to expression, high levels of expression in brain, testes, liver, heart and kidney.

Its subcellular location is the cytoplasm. The protein localises to the perinuclear region. It localises to the cell membrane. The protein resides in the endosome membrane. In terms of biological role, GTPase-activating protein that catalyzes the conversion of active GTP-bound Rho GTPases to their inactive GDP-bound form, thus suppressing various Rho GTPase-mediated cellular processes. Also converts Cdc42 to an inactive GDP-bound state. Essential for PTKB2 regulation of cytoskeletal organization via Rho family GTPases. Inhibits PAK2 proteolytic fragment PAK-2p34 kinase activity and changes its localization from the nucleus to the perinuclear region. Stabilizes PAK-2p34 thereby increasing stimulation of cell death. Associates with MICAL1 on the endosomal membrane to promote Rab8-Rab10-dependent tubule extension. After dissociation with MICAL1, recruits WDR44 which connects the endoplasmic reticulum (ER) with the endosomal tubule, thereby participating in the export of a subset of neosynthesized proteins. The protein is Rho GTPase-activating protein 10 (Arhgap10) of Mus musculus (Mouse).